The following is a 591-amino-acid chain: Formate--tetrahydrofolate ligase (591 aa).

74 to 81 contacts ATP; the sequence is TPLGEGKS.

Belongs to the formate--tetrahydrofolate ligase family.

It carries out the reaction (6S)-5,6,7,8-tetrahydrofolate + formate + ATP = (6R)-10-formyltetrahydrofolate + ADP + phosphate. The protein operates within one-carbon metabolism; tetrahydrofolate interconversion. In Lawsonia intracellularis (strain PHE/MN1-00), this protein is Formate--tetrahydrofolate ligase.